Reading from the N-terminus, the 1041-residue chain is Leucine-rich repeat receptor-like protein kinase TDR (1041 aa).

An N-terminal signal peptide occupies residues 1-29 (MKKKNISPSLVLHPLLLLLLPFFAFNSLA). Residues 30-652 (LKFSPQLLSL…HHKEERPKKT (623 aa)) are Extracellular-facing. Cys-69 and Cys-76 form a disulfide bridge. 3 N-linked (GlcNAc...) asparagine glycosylation sites follow: Asn-78, Asn-92, and Asn-111. LRR repeat units follow at residues 80–104 (TAQV…IRYL), 105–128 (SSLL…IFDL), 130–152 (KLTT…ISKL), 154–176 (FLKV…VSRL), 177–199 (RFLE…AYGG), 200–224 (LQRL…LGLL), 225–248 (TELQ…FALL), 250–272 (NLKY…LGNL), 273–296 (SNLE…YSNL), 297–319 (KSLK…GFST), 321–344 (KNLT…IGEL), 345–368 (PELT…LGSN), 369–392 (GKLE…LCHG), 394–416 (KLYK…LTRC), 418–439 (SLWR…GFGS), 440–464 (LRNL…FATA), 466–488 (VLQY…IWKA), 511–535 (CKSF…IGHC), 536–558 (EKLL…EIST), 559–583 (LPSI…FGSS), and 585–607 (TITT…SFAH). Residues 186–188 (GSY) form a CLE peptide binding region. A CLE peptide binding region spans residues 233-235 (GYN). N-linked (GlcNAc...) asparagine glycans are attached at residues Asn-258 and Asn-271. A CLE peptide binding region spans residues 303 to 307 (DFSSN). N-linked (GlcNAc...) asparagine glycosylation is found at Asn-322, Asn-332, and Asn-356. Residues 375–377 (DVS) form a CLE peptide binding region. N-linked (GlcNAc...) asparagine glycosylation occurs at Asn-378. Cys-390 and Cys-416 are disulfide-bonded. Positions 421–423 (RFR) are CLE peptide binding. N-linked (GlcNAc...) asparagine glycans are attached at residues Asn-430, Asn-442, Asn-471, Asn-525, and Asn-542. Cys-511 and Cys-535 are joined by a disulfide. N-linked (GlcNAc...) asparagine glycosylation occurs at Asn-590. Residues Cys-620 and Cys-628 are joined by a disulfide bond. A helical membrane pass occupies residues 653–673 (AGAIVWILAAAIGVGFFVLVA). The Cytoplasmic portion of the chain corresponds to 674–1041 (ATRCFQKSYG…HDVKCQRIGV (368 aa)). At Thr-710 the chain carries Phosphothreonine. The Protein kinase domain occupies 719 to 1001 (SKTDNILGMG…DVLLILQEAK (283 aa)). Residues 725-733 (LGMGSTGTV) and Lys-747 contribute to the ATP site. 2 positions are modified to phosphotyrosine: Tyr-798 and Tyr-839. Asp-852 serves as the catalytic Proton acceptor. Ser-884 is subject to Phosphoserine. Phosphotyrosine occurs at positions 892 and 899. Thr-900 carries the post-translational modification Phosphothreonine.

The protein belongs to the protein kinase superfamily. Ser/Thr protein kinase family. As to quaternary structure, interacts specifically with the mature peptides CLE41p and CLE44p, especially in the presence of SERK2. Interacts with LURE1.2. As to expression, widely expressed along the vascular strands. In roots and hypocotyls, confined to procambial cells.

It localises to the cell membrane. The enzyme catalyses L-seryl-[protein] + ATP = O-phospho-L-seryl-[protein] + ADP + H(+). The catalysed reaction is L-threonyl-[protein] + ATP = O-phospho-L-threonyl-[protein] + ADP + H(+). Acts with CLE41p and CLE44p peptides as a ligand-receptor pair in a signal transduction pathway involved in the regulation of procambium maintenance and polarity during vascular-tissue development. Mediates repression of tracheary element differentiation and the promotion of procambial cells formation and polar division adjacent to phloem cells in the veins. This chain is Leucine-rich repeat receptor-like protein kinase TDR, found in Arabidopsis thaliana (Mouse-ear cress).